Consider the following 194-residue polypeptide: Fe/S biogenesis protein NfuA (194 aa).

2 residues coordinate [4Fe-4S] cluster: C151 and C154.

The protein belongs to the NfuA family. As to quaternary structure, homodimer. Requires [4Fe-4S] cluster as cofactor.

Its function is as follows. Involved in iron-sulfur cluster biogenesis. Binds a 4Fe-4S cluster, can transfer this cluster to apoproteins, and thereby intervenes in the maturation of Fe/S proteins. Could also act as a scaffold/chaperone for damaged Fe/S proteins. The polypeptide is Fe/S biogenesis protein NfuA (Aliivibrio fischeri (strain ATCC 700601 / ES114) (Vibrio fischeri)).